The chain runs to 1481 residues: RNA helicase aquarius (1481 aa).

The helical region with structural similarity to ARM repeat domains stretch occupies residues 1–416; sequence MAAPAQPKKI…LVSRHERRIS (416 aa). Positions 417–1481 are required for assembly of the IB complex; that stretch reads QIQQLNQMPL…DAESVPTETE (1065 aa). Residues 754-773 are disordered; sequence RSGKGKKRKDADGEEDDTEE. ATP is bound by residues glutamine 801, glutamine 806, and 826–831; that span reads GTGKTD. The residue at position 1055 (lysine 1055) is an N6-acetyllysine. The span at 1396–1414 shows a compositional bias: acidic residues; that stretch reads EEGEEGQSQETEMEAEEET. The segment at 1396 to 1481 is disordered; the sequence is EEGEEGQSQE…DAESVPTETE (86 aa). Polar residues predominate over residues 1418–1448; the sequence is QGNLTPSPADASLSQETPAAQPDCSSQTEDT. Low complexity predominate over residues 1455-1468; it reads ATAAEPVSAAAEAA.

It belongs to the CWF11 family. In terms of assembly, identified in the spliceosome C complex. Component of the XAB2 complex, a multimeric protein complex composed of XAB2, PRPF19, AQR, ZNF830, ISY1, and PPIE. Identified in a pentameric intron-binding (IB) complex composed of AQR, XAB2, ISY1, ZNF830 and PPIE that is incorporated into the spliceosome as a preassembled complex. The IB complex does not contain PRPF19. Within the spliceosome, interacts with SNRPA1, SF3B1, SF3B3, SF3A1 and SF3A2.

The protein resides in the nucleus. The protein localises to the nucleoplasm. The catalysed reaction is ATP + H2O = ADP + phosphate + H(+). Involved in pre-mRNA splicing as component of the spliceosome. Intron-binding spliceosomal protein required to link pre-mRNA splicing and snoRNP (small nucleolar ribonucleoprotein) biogenesis. Plays a key role in position-dependent assembly of intron-encoded box C/D small snoRNP, splicing being required for snoRNP assembly. May act by helping the folding of the snoRNA sequence. Binds to intron of pre-mRNAs in a sequence-independent manner, contacting the region between snoRNA and the branchpoint of introns (40 nucleotides upstream of the branchpoint) during the late stages of splicing. Has ATP-dependent RNA helicase activity and can unwind double-stranded RNA molecules with a 3' overhang (in vitro). The chain is RNA helicase aquarius (Aqr) from Mus musculus (Mouse).